The sequence spans 451 residues: uncharacterized protein (451 aa).

The segment at 1–451 (MSETENKTTT…KKEAAKNKSK (451 aa)) is disordered. Residues 9 to 22 (TTETPTTTDSTVTT) are compositionally biased toward low complexity. The span at 44 to 54 (VKNQLSNTRTR) shows a compositional bias: polar residues. Basic and acidic residues predominate over residues 73-99 (KLIDTKERKEKKEKKEKEPKEPKEPKE). Positions 114–147 (GDEEEDEEKEEDEEQKEEQSQEEDSEESEEEQNS) are enriched in acidic residues. A compositionally biased stretch (basic residues) spans 152–162 (KKKKKQAKKVA). 3 stretches are compositionally biased toward basic and acidic residues: residues 163 to 192 (KKET…EKEA), 199 to 210 (STEKKEKEEKPK), and 217 to 230 (KKDQ…KDGD). Positions 232–244 (STTTTATATTTTD) are enriched in low complexity. Basic and acidic residues-rich tracts occupy residues 284–303 (TEEK…ETKK) and 311–340 (AAAE…DDKP). The span at 341–355 (AATTTTTTAAAATTT) shows a compositional bias: low complexity. Residues 356 to 383 (EEPKEKITKPAADKKKAPANKKAEKDQS) show a composition bias toward basic and acidic residues. Positions 393-425 (TTTATTTTTNKDATAPTTTTNKDATAPTTTTTK) are enriched in low complexity. The span at 441-451 (PKKEAAKNKSK) shows a compositional bias: basic and acidic residues.

This is an uncharacterized protein from Dictyostelium discoideum (Social amoeba).